The primary structure comprises 109 residues: MQQFEWIHGAWLGLAIVLEIAANVLLKFSDGFRRKCYGILSLAAVLAAFSALSQAVKGIDLSVAYALWGGFGIAATLAAGWVLFGQRLNPKGWVGVILLLAGMVMIKFA.

A run of 4 helical transmembrane segments spans residues 6–26, 36–56, 64–84, and 88–108; these read WIHGAWLGLAIVLEIAANVLL, CYGILSLAAVLAAFSALSQAV, AYALWGGFGIAATLAAGWVLF, and LNPKGWVGVILLLAGMVMIKF.

This sequence belongs to the drug/metabolite transporter (DMT) superfamily. Small multidrug resistance (SMR) (TC 2.A.7.1) family. MdtI subfamily. As to quaternary structure, forms a complex with MdtJ.

It is found in the cell inner membrane. Functionally, catalyzes the excretion of spermidine. This chain is Spermidine export protein MdtI, found in Salmonella paratyphi A (strain ATCC 9150 / SARB42).